The chain runs to 221 residues: 7-cyano-7-deazaguanine synthase (221 aa).

9–19 (YSGGMDSFTVL) lines the ATP pocket. The Zn(2+) site is built by Cys-186, Cys-194, Cys-197, and Cys-200.

This sequence belongs to the QueC family. Requires Zn(2+) as cofactor.

The catalysed reaction is 7-carboxy-7-deazaguanine + NH4(+) + ATP = 7-cyano-7-deazaguanine + ADP + phosphate + H2O + H(+). Its pathway is purine metabolism; 7-cyano-7-deazaguanine biosynthesis. In terms of biological role, catalyzes the ATP-dependent conversion of 7-carboxy-7-deazaguanine (CDG) to 7-cyano-7-deazaguanine (preQ(0)). The protein is 7-cyano-7-deazaguanine synthase of Psychromonas ingrahamii (strain DSM 17664 / CCUG 51855 / 37).